Reading from the N-terminus, the 469-residue chain is uncharacterized protein (469 aa).

2 disordered regions span residues 248–314 and 327–418; these read RDDN…EPES and QMDQ…PRPT. 2 stretches are compositionally biased toward polar residues: residues 292 to 305 and 350 to 365; these read ESSN…NAAS and TARQ…PNTV. Over residues 366 to 377 the composition is skewed to low complexity; sequence TATSASTPASTS.

This is an uncharacterized protein from Cryphonectria parasitica (Chestnut blight fungus).